The following is a 542-amino-acid chain: Chaperonin GroEL 2 (542 aa).

ATP contacts are provided by residues 30 to 33 (TLGP), Lys51, 87 to 91 (DGTTT), Gly415, and Asp496.

This sequence belongs to the chaperonin (HSP60) family. In terms of assembly, forms a cylinder of 14 subunits composed of two heptameric rings stacked back-to-back. Interacts with the co-chaperonin GroES.

It localises to the cytoplasm. The catalysed reaction is ATP + H2O + a folded polypeptide = ADP + phosphate + an unfolded polypeptide.. Its function is as follows. Together with its co-chaperonin GroES, plays an essential role in assisting protein folding. The GroEL-GroES system forms a nano-cage that allows encapsulation of the non-native substrate proteins and provides a physical environment optimized to promote and accelerate protein folding. This chain is Chaperonin GroEL 2, found in Rhizobium leguminosarum.